Consider the following 603-residue polypeptide: Conglutin beta 2 (603 aa).

The N-terminal stretch at M1 to G30 is a signal peptide. Over residues K36–E105 the composition is skewed to basic and acidic residues. Disordered regions lie at residues K36 to Y177, D343 to V363, and L375 to D399. Residues Q137 to S147 are compositionally biased toward low complexity. Positions G148–R172 are enriched in basic and acidic residues. The Cupin type-1 1 domain maps to Y177–Q335. A compositionally biased stretch (low complexity) spans S381–P393. The Cupin type-1 2 domain occupies F394–E554. N504 carries N-linked (GlcNAc...) asparagine glycosylation. A compositionally biased stretch (low complexity) spans Y564 to Q574. The segment at Y564–G583 is disordered.

The protein belongs to the 7S seed storage protein family. In terms of assembly, component of globulins complexes which accumulate in seeds.

Seed storage protein. Accumulates during seed development and is hydrolyzed after germination to provide a carbon and nitrogen source for the developing seedling. The chain is Conglutin beta 2 from Lupinus angustifolius (Narrow-leaved blue lupine).